The chain runs to 155 residues: uncharacterized protein (155 aa).

The region spanning 37–140 is the SCP domain; sequence IAELRKKLNL…GGYRLKTTDN (104 aa).

This is an uncharacterized protein from Borreliella burgdorferi (strain ATCC 35210 / DSM 4680 / CIP 102532 / B31) (Borrelia burgdorferi).